The sequence spans 597 residues: Cell division cycle protein 23 homolog (597 aa).

N-acetylalanine is present on A2. 3 TPR repeats span residues 27 to 63, 73 to 112, and 114 to 144; these read SDLR…FSLP, PPPI…CNSK, and AYFL…LEKG. Residue K147 forms a Glycyl lysine isopeptide (Lys-Gly) (interchain with G-Cter in SUMO2) linkage. 8 TPR repeats span residues 169-200, 229-259, 263-293, 297-327, 331-361, 366-395, 400-432, and 433-466; these read GFGL…HVLP, MKEF…DVGF, SYIV…RKQD, IENM…CEID, VETC…LKLN, GAWT…IEVN, RAWY…RPND, and SRML…GDVE. Y273 is subject to Phosphotyrosine. Residue K467 is modified to N6-acetyllysine. TPR repeat units follow at residues 468 to 500 and 504 to 540; these read MALV…IYSC and VEHL…CAFN. Phosphothreonine occurs at positions 562 and 565. S578 carries the phosphoserine modification. T582 carries the post-translational modification Phosphothreonine. 2 positions are modified to phosphoserine: S588 and S593. T596 is subject to Phosphothreonine.

Belongs to the APC8/CDC23 family. In terms of assembly, the mammalian APC/C is composed at least of 14 distinct subunits ANAPC1, ANAPC2, CDC27/APC3, ANAPC4, ANAPC5, CDC16/APC6, ANAPC7, CDC23/APC8, ANAPC10, ANAPC11, CDC26/APC12, ANAPC13, ANAPC15 and ANAPC16 that assemble into a complex of at least 19 chains with a combined molecular mass of around 1.2 MDa; APC/C interacts with FZR1 and FBXO5. Interacts with FBXO43; the interaction is direct. In terms of processing, phosphorylated. Phosphorylation on Thr-562 occurs specifically during mitosis.

Its pathway is protein modification; protein ubiquitination. Component of the anaphase promoting complex/cyclosome (APC/C), a cell cycle-regulated E3 ubiquitin ligase that controls progression through mitosis and the G1 phase of the cell cycle. The APC/C complex acts by mediating ubiquitination and subsequent degradation of target proteins: it mainly mediates the formation of 'Lys-11'-linked polyubiquitin chains and, to a lower extent, the formation of 'Lys-48'- and 'Lys-63'-linked polyubiquitin chains. The APC/C complex catalyzes assembly of branched 'Lys-11'-/'Lys-48'-linked branched ubiquitin chains on target proteins. The chain is Cell division cycle protein 23 homolog (CDC23) from Homo sapiens (Human).